Here is a 212-residue protein sequence, read N- to C-terminus: Methylthioribulose-1-phosphate dehydratase (212 aa).

2 residues coordinate Zn(2+): His98 and His100.

The protein belongs to the aldolase class II family. MtnB subfamily. Zn(2+) is required as a cofactor.

The enzyme catalyses 5-(methylsulfanyl)-D-ribulose 1-phosphate = 5-methylsulfanyl-2,3-dioxopentyl phosphate + H2O. Its pathway is amino-acid biosynthesis; L-methionine biosynthesis via salvage pathway; L-methionine from S-methyl-5-thio-alpha-D-ribose 1-phosphate: step 2/6. Functionally, catalyzes the dehydration of methylthioribulose-1-phosphate (MTRu-1-P) into 2,3-diketo-5-methylthiopentyl-1-phosphate (DK-MTP-1-P). This chain is Methylthioribulose-1-phosphate dehydratase, found in Picosynechococcus sp. (strain ATCC 27264 / PCC 7002 / PR-6) (Agmenellum quadruplicatum).